We begin with the raw amino-acid sequence, 663 residues long: Alpha-1,4-glucan:maltose-1-phosphate maltosyltransferase (663 aa).

The tract at residues 238–266 (IGETNRKGPDDAPEAGPDDPGSPWAIGGF) is disordered. Residues lysine 244, glutamine 309, and aspartate 344 each contribute to the alpha-maltose 1-phosphate site. Aspartate 380 serves as the catalytic Nucleophile. Residue asparagine 381 participates in alpha-maltose 1-phosphate binding. The active-site Proton donor is glutamate 409. 521 to 522 (KY) contacts alpha-maltose 1-phosphate.

Belongs to the glycosyl hydrolase 13 family. GlgE subfamily. As to quaternary structure, homodimer.

The enzyme catalyses alpha-maltose 1-phosphate + [(1-&gt;4)-alpha-D-glucosyl](n) = [(1-&gt;4)-alpha-D-glucosyl](n+2) + phosphate. In terms of biological role, maltosyltransferase that uses maltose 1-phosphate (M1P) as the sugar donor to elongate linear or branched alpha-(1-&gt;4)-glucans. Is involved in a branched alpha-glucan biosynthetic pathway from trehalose, together with TreS, Mak and GlgB. The chain is Alpha-1,4-glucan:maltose-1-phosphate maltosyltransferase from Salinibacter ruber (strain DSM 13855 / M31).